Reading from the N-terminus, the 201-residue chain is tRNA (guanine-N(7)-)-methyltransferase (201 aa).

4 residues coordinate S-adenosyl-L-methionine: E33, E58, D85, and D108. D108 is a catalytic residue. Substrate is bound by residues K112 and D144.

This sequence belongs to the class I-like SAM-binding methyltransferase superfamily. TrmB family.

It carries out the reaction guanosine(46) in tRNA + S-adenosyl-L-methionine = N(7)-methylguanosine(46) in tRNA + S-adenosyl-L-homocysteine. The protein operates within tRNA modification; N(7)-methylguanine-tRNA biosynthesis. In terms of biological role, catalyzes the formation of N(7)-methylguanine at position 46 (m7G46) in tRNA. In Anaeromyxobacter dehalogenans (strain 2CP-C), this protein is tRNA (guanine-N(7)-)-methyltransferase.